A 50-amino-acid polypeptide reads, in one-letter code: Peptide encoded by miPEP319a (50 aa).

Its function is as follows. Regulatory peptide encoded by the primary transcript (pri-miR319a) of the microRNA miR319a that enhances the accumulation of its corresponding mature miRNA. Acts probably as a transcriptional activator of its corresponding pri-miRNA. The protein is Peptide encoded by miPEP319a of Arabidopsis thaliana (Mouse-ear cress).